Here is a 360-residue protein sequence, read N- to C-terminus: Secreted LysM effector LysM2 (360 aa).

Positions Met-1–Gly-21 are cleaved as a signal peptide. Residues Thr-37 to Val-85 form the LysM 1 domain. Low complexity predominate over residues Ala-94–Ala-113. The interval Ala-94–Gly-125 is disordered. An N-linked (GlcNAc...) asparagine glycan is attached at Asn-129. Residues Lys-132–Val-179 enclose the LysM 2 domain. The N-linked (GlcNAc...) asparagine glycan is linked to Asn-204. 2 consecutive LysM domains span residues Arg-225 to Ile-272 and Lys-311 to Val-357.

It belongs to the secreted LysM effector family.

It is found in the secreted. The protein localises to the cell wall. Its function is as follows. Secreted effector that binds two substrates, chitin and N-linked oligosaccharides associated with human skin glycoproteins. Could provide the pathogen with three important functions including shielding host cell wall chitin from the human immune system, shielding the pathogen's glycoproteins from host degradation and immune surveillance, and helping facilitate pathogen adhesion to human skin. This Trichophyton rubrum (strain ATCC MYA-4607 / CBS 118892) (Athlete's foot fungus) protein is Secreted LysM effector LysM2.